The following is a 264-amino-acid chain: Thymidylate synthase 2 (264 aa).

Arginine 21 contacts dUMP. Residue histidine 51 coordinates (6R)-5,10-methylene-5,6,7,8-tetrahydrofolate. 126–127 (RR) is a dUMP binding site. Residue cysteine 146 is the Nucleophile of the active site. DUMP is bound by residues 166 to 169 (RSAD), asparagine 177, and 207 to 209 (HIY). Aspartate 169 contributes to the (6R)-5,10-methylene-5,6,7,8-tetrahydrofolate binding site. (6R)-5,10-methylene-5,6,7,8-tetrahydrofolate is bound at residue serine 263.

Belongs to the thymidylate synthase family. Bacterial-type ThyA subfamily. As to quaternary structure, homodimer.

It is found in the cytoplasm. It catalyses the reaction dUMP + (6R)-5,10-methylene-5,6,7,8-tetrahydrofolate = 7,8-dihydrofolate + dTMP. The protein operates within pyrimidine metabolism; dTTP biosynthesis. Functionally, catalyzes the reductive methylation of 2'-deoxyuridine-5'-monophosphate (dUMP) to 2'-deoxythymidine-5'-monophosphate (dTMP) while utilizing 5,10-methylenetetrahydrofolate (mTHF) as the methyl donor and reductant in the reaction, yielding dihydrofolate (DHF) as a by-product. This enzymatic reaction provides an intracellular de novo source of dTMP, an essential precursor for DNA biosynthesis. This chain is Thymidylate synthase 2, found in Bacillus spizizenii (strain ATCC 23059 / NRRL B-14472 / W23) (Bacillus subtilis subsp. spizizenii).